The primary structure comprises 342 residues: Phosphate acyltransferase (342 aa).

The protein belongs to the PlsX family. In terms of assembly, homodimer. Probably interacts with PlsY.

It localises to the cytoplasm. The catalysed reaction is a fatty acyl-[ACP] + phosphate = an acyl phosphate + holo-[ACP]. Its pathway is lipid metabolism; phospholipid metabolism. In terms of biological role, catalyzes the reversible formation of acyl-phosphate (acyl-PO(4)) from acyl-[acyl-carrier-protein] (acyl-ACP). This enzyme utilizes acyl-ACP as fatty acyl donor, but not acyl-CoA. The sequence is that of Phosphate acyltransferase from Shewanella halifaxensis (strain HAW-EB4).